We begin with the raw amino-acid sequence, 675 residues long: UvrABC system protein B (675 aa).

Residues 35–192 (QGMRDGLMYQ…ARLVAMQYTR (158 aa)) enclose the Helicase ATP-binding domain. ATP is bound at residue 48–55 (GVTGSGKT). The Beta-hairpin signature appears at 101–124 (YYDYYQPEAYVPTRDLFIEKDSSI). Positions 439–605 (QVDDLLGEIK…GVNKAVRELI (167 aa)) constitute a Helicase C-terminal domain. The UVR domain occupies 633-668 (AREIRRLEKLMTDHARNLEFEQAAAARDALNALKQR).

Belongs to the UvrB family. Forms a heterotetramer with UvrA during the search for lesions. Interacts with UvrC in an incision complex.

The protein localises to the cytoplasm. The UvrABC repair system catalyzes the recognition and processing of DNA lesions. A damage recognition complex composed of 2 UvrA and 2 UvrB subunits scans DNA for abnormalities. Upon binding of the UvrA(2)B(2) complex to a putative damaged site, the DNA wraps around one UvrB monomer. DNA wrap is dependent on ATP binding by UvrB and probably causes local melting of the DNA helix, facilitating insertion of UvrB beta-hairpin between the DNA strands. Then UvrB probes one DNA strand for the presence of a lesion. If a lesion is found the UvrA subunits dissociate and the UvrB-DNA preincision complex is formed. This complex is subsequently bound by UvrC and the second UvrB is released. If no lesion is found, the DNA wraps around the other UvrB subunit that will check the other stand for damage. The chain is UvrABC system protein B from Bordetella petrii (strain ATCC BAA-461 / DSM 12804 / CCUG 43448).